Reading from the N-terminus, the 263-residue chain is Probable WRKY transcription factor 62 (263 aa).

The disordered stretch occupies residues 59–104 (DHQDDQSNNSSPQDSSPVLESSRKPLHKRGRKTSMAESSDYHRHES). Over residues 64–74 (QSNNSSPQDSS) the composition is skewed to low complexity. A DNA-binding region (WRKY) is located at residues 104 to 174 (SSTPIYHDGF…GQHICQLHQA (71 aa)).

Belongs to the WRKY group III family.

It localises to the nucleus. Transcription factor. Interacts specifically with the W box (5'-(T)TGAC[CT]-3'), a frequently occurring elicitor-responsive cis-acting element. This Arabidopsis thaliana (Mouse-ear cress) protein is Probable WRKY transcription factor 62 (WRKY62).